Reading from the N-terminus, the 930-residue chain is Zn(2)-C6 fungal-type transcription factor FTF1c (930 aa).

A DNA-binding region (zn(2)-C6 fungal-type) is located at residues 137 to 164; the sequence is CIPCRRKKIRCSGEKPACEHCLRSYIPC.

It localises to the nucleus. Functionally, zn(2)-C6 fungal-type transcription factor that has a role in the establishment of the fungus within the plant and/or the progress of the disease. Regulates the expression of virulence factors such as SIX1 and SIX6. The sequence is that of Zn(2)-C6 fungal-type transcription factor FTF1c from Fusarium oxysporum f. sp. lycopersici (strain 4287 / CBS 123668 / FGSC 9935 / NRRL 34936) (Fusarium vascular wilt of tomato).